The following is a 346-amino-acid chain: UDP-3-O-acylglucosamine N-acyltransferase (346 aa).

H240 acts as the Proton acceptor in catalysis.

It belongs to the transferase hexapeptide repeat family. LpxD subfamily. Homotrimer.

The enzyme catalyses a UDP-3-O-[(3R)-3-hydroxyacyl]-alpha-D-glucosamine + a (3R)-hydroxyacyl-[ACP] = a UDP-2-N,3-O-bis[(3R)-3-hydroxyacyl]-alpha-D-glucosamine + holo-[ACP] + H(+). The protein operates within bacterial outer membrane biogenesis; LPS lipid A biosynthesis. Its function is as follows. Catalyzes the N-acylation of UDP-3-O-acylglucosamine using 3-hydroxyacyl-ACP as the acyl donor. Is involved in the biosynthesis of lipid A, a phosphorylated glycolipid that anchors the lipopolysaccharide to the outer membrane of the cell. The chain is UDP-3-O-acylglucosamine N-acyltransferase from Bacteroides fragilis (strain ATCC 25285 / DSM 2151 / CCUG 4856 / JCM 11019 / LMG 10263 / NCTC 9343 / Onslow / VPI 2553 / EN-2).